A 278-amino-acid polypeptide reads, in one-letter code: HTH-type transcriptional activator RhaS (278 aa).

In terms of domain architecture, HTH araC/xylS-type spans 174–272; that stretch reads NLLLAWLEDH…NWSPRDIRQG (99 aa). 2 DNA-binding regions (H-T-H motif) span residues 191-212 and 239-262; these read DAVA…KQQT and VTDI…RREF.

Binds DNA as a dimer.

Its subcellular location is the cytoplasm. Activates expression of the rhaBAD and rhaT operons. The polypeptide is HTH-type transcriptional activator RhaS (Shigella boydii serotype 4 (strain Sb227)).